We begin with the raw amino-acid sequence, 129 residues long: uncharacterized protein (129 aa).

Belongs to the HesB/IscA family.

This is an uncharacterized protein from Buchnera aphidicola subsp. Schizaphis graminum (strain Sg).